The primary structure comprises 434 residues: Alpha-enolase (434 aa).

Position 40 (Ser-40) interacts with Mg(2+). Residues His-158 and Glu-167 each coordinate substrate. Residue Glu-210 is the Proton donor of the active site. Mg(2+) contacts are provided by Asp-245, Glu-293, and Asp-318. Positions 293 and 318 each coordinate substrate. Lys-343 functions as the Proton acceptor in the catalytic mechanism. Residues 370 to 373 (SHRS) and Lys-394 contribute to the substrate site.

The protein belongs to the enolase family. Homodimer. Mg(2+) serves as cofactor.

It localises to the cytoplasm. It carries out the reaction (2R)-2-phosphoglycerate = phosphoenolpyruvate + H2O. It functions in the pathway carbohydrate degradation; glycolysis; pyruvate from D-glyceraldehyde 3-phosphate: step 4/5. In Xenopus laevis (African clawed frog), this protein is Alpha-enolase (eno1).